Consider the following 203-residue polypeptide: Recombination protein RecR (203 aa).

The C4-type zinc-finger motif lies at 56-71; the sequence is CSVCGNVSDEERCRIC. The region spanning 79 to 179 is the Toprim domain; sequence SLVCVVEEPK…TVTRIASGLP (101 aa).

The protein belongs to the RecR family.

May play a role in DNA repair. It seems to be involved in an RecBC-independent recombinational process of DNA repair. It may act with RecF and RecO. In Mycolicibacterium smegmatis (strain ATCC 700084 / mc(2)155) (Mycobacterium smegmatis), this protein is Recombination protein RecR.